Here is a 41-residue protein sequence, read N- to C-terminus: Ornatin-A2 (41 aa).

Positions 33–35 (RGD) match the Cell attachment site motif.

It belongs to the ornatin family.

The protein resides in the secreted. In terms of biological role, potent inhibitor of fibrinogen interaction with platelet receptors expressed on glycoprotein IIb-IIIa complex. May prevent blood from clotting during either feeding and/or storage of ingested blood. This chain is Ornatin-A2, found in Placobdella ornata (Turtle leech).